Here is a 127-residue protein sequence, read N- to C-terminus: Phosphoribosyl-ATP pyrophosphatase (127 aa).

The protein belongs to the PRA-PH family.

The protein localises to the cytoplasm. The catalysed reaction is 1-(5-phospho-beta-D-ribosyl)-ATP + H2O = 1-(5-phospho-beta-D-ribosyl)-5'-AMP + diphosphate + H(+). It participates in amino-acid biosynthesis; L-histidine biosynthesis; L-histidine from 5-phospho-alpha-D-ribose 1-diphosphate: step 2/9. The sequence is that of Phosphoribosyl-ATP pyrophosphatase from Polaromonas sp. (strain JS666 / ATCC BAA-500).